The primary structure comprises 522 residues: Glucose-1-phosphate adenylyltransferase large subunit, chloroplastic/amyloplastic (522 aa).

A chloroplast-targeting transit peptide spans 1–62 (MSSMQFSSVL…RGPAATGAQC (62 aa)). Over residues 28–42 (SERLKVGDSSSIRHE) the composition is skewed to basic and acidic residues. The disordered stretch occupies residues 28–54 (SERLKVGDSSSIRHERASRRMCNGGRG).

Belongs to the bacterial/plant glucose-1-phosphate adenylyltransferase family. Heterotetramer. Abundantly expressed in the whole grains, a slightly less abundant expression is seen in leaves, while a low level expression is seen in the roots. A greater expression is seen in the endosperm than in the embryo and pericarp layers.

The protein localises to the plastid. It localises to the chloroplast. The protein resides in the amyloplast. The enzyme catalyses alpha-D-glucose 1-phosphate + ATP + H(+) = ADP-alpha-D-glucose + diphosphate. It participates in glycan biosynthesis; starch biosynthesis. Insensitive to 3'phosphoglycerate and orthophosphate. Functionally, this protein plays a role in synthesis of starch. It catalyzes the synthesis of the activated glycosyl donor, ADP-glucose from Glc-1-P and ATP. This chain is Glucose-1-phosphate adenylyltransferase large subunit, chloroplastic/amyloplastic (AGP-L), found in Triticum aestivum (Wheat).